A 493-amino-acid chain; its full sequence is Cysteine--tRNA ligase (493 aa).

Cys41 is a Zn(2+) binding site. The short motif at 43-53 is the 'HIGH' region element; the sequence is PTVYNYPHIGN. Zn(2+)-binding residues include Cys231, His256, and Glu260. The 'KMSKS' region motif lies at 296 to 300; the sequence is KMSKS. Lys299 contributes to the ATP binding site.

The protein belongs to the class-I aminoacyl-tRNA synthetase family. As to quaternary structure, monomer. The cofactor is Zn(2+).

The protein localises to the cytoplasm. It catalyses the reaction tRNA(Cys) + L-cysteine + ATP = L-cysteinyl-tRNA(Cys) + AMP + diphosphate. The sequence is that of Cysteine--tRNA ligase from Novosphingobium aromaticivorans (strain ATCC 700278 / DSM 12444 / CCUG 56034 / CIP 105152 / NBRC 16084 / F199).